Here is a 385-residue protein sequence, read N- to C-terminus: 4-hydroxy-3-methylbut-2-en-1-yl diphosphate synthase (flavodoxin) (385 aa).

Positions 280, 283, 315, and 322 each coordinate [4Fe-4S] cluster.

This sequence belongs to the IspG family. The cofactor is [4Fe-4S] cluster.

It catalyses the reaction (2E)-4-hydroxy-3-methylbut-2-enyl diphosphate + oxidized [flavodoxin] + H2O + 2 H(+) = 2-C-methyl-D-erythritol 2,4-cyclic diphosphate + reduced [flavodoxin]. It participates in isoprenoid biosynthesis; isopentenyl diphosphate biosynthesis via DXP pathway; isopentenyl diphosphate from 1-deoxy-D-xylulose 5-phosphate: step 5/6. Its function is as follows. Converts 2C-methyl-D-erythritol 2,4-cyclodiphosphate (ME-2,4cPP) into 1-hydroxy-2-methyl-2-(E)-butenyl 4-diphosphate. The sequence is that of 4-hydroxy-3-methylbut-2-en-1-yl diphosphate synthase (flavodoxin) from Streptomyces griseus subsp. griseus (strain JCM 4626 / CBS 651.72 / NBRC 13350 / KCC S-0626 / ISP 5235).